The chain runs to 339 residues: Phenylalanine--tRNA ligase alpha subunit (339 aa).

Mg(2+) is bound at residue Glu-254.

It belongs to the class-II aminoacyl-tRNA synthetase family. Phe-tRNA synthetase alpha subunit type 1 subfamily. In terms of assembly, tetramer of two alpha and two beta subunits. Mg(2+) serves as cofactor.

The protein resides in the cytoplasm. The enzyme catalyses tRNA(Phe) + L-phenylalanine + ATP = L-phenylalanyl-tRNA(Phe) + AMP + diphosphate + H(+). The chain is Phenylalanine--tRNA ligase alpha subunit from Clostridium novyi (strain NT).